Consider the following 804-residue polypeptide: MQVSLRWLKDYVDIDLTPAEVSDRLTMAGLEVDAVREVGPSFSNVVVARIIALRRHPNADKLSLCEVTTGDETLPIVCGAPNIHVGDVVPLARIGAEIPGGYTIKRSKIRGELSEGMLCSEEELGIGEDTTGVMILPPNLPLGEDLADVLDLKDTVFDIGITPNRSDCLSIIGVAREIAAITGKPLKLPEIYVTENAEDIQVSASVQILDPDLCPHYTARMIRDVVVGPSPQWMRLRLEAVGLRSISNVVDVTNFVMMELGQPLHAFDYRFLEEGRIVVRRSTEGEKFISLDEKERVLNANTLMICDGVKPVAIAGIMGGFNSEIKPDTRDILLESAYFAPSSIRRSARDLGMSTDAAFRFERGIDPEGVLRALDRAAQLIAELSGGKICKGRIDEHPKPVETVGEIHLRCRKVNSLLGTNIPAAEMADILRGLGMEVTAKEGTVEEYRIKPPSFRVDIGREIDLVEEIARIHGYDNIPVSLPVGAMEPVPRDRRKILEERLRRHLAGTGFSEVITYSFVSPTAADILALDAGDERRKVVRIKNPLTEDQSVMRTTLIYSLLKVMQENANAGDYDLKIFEIGKIFLQGNTGGLPTEKKRLACLMTGMSDKELWSSGESRLDFYDLKGVVESLFASLNLTGIRYCSDALQAFLHPGRSCGIFIDEKSIGYMGEAHPDVLSRLDMKNRALIFEMDVDAISELFSGSVTYKEFSRYPESSRDVAFVIDQDVEADGMLNIALNAREELLENVCIFDVYAGAGVPEGKKSLGLRFTYRSYSATLTDDEVSRVHSKIVQRIIDQTGARVR.

One can recognise a tRNA-binding domain in the interval Gly-39–Ala-147. Positions Glu-402 to Val-480 constitute a B5 domain. The Mg(2+) site is built by Asp-458, Asp-464, Glu-467, and Glu-468. Positions Ser-711–Arg-804 constitute an FDX-ACB domain.

This sequence belongs to the phenylalanyl-tRNA synthetase beta subunit family. Type 1 subfamily. In terms of assembly, tetramer of two alpha and two beta subunits. Requires Mg(2+) as cofactor.

The protein resides in the cytoplasm. It catalyses the reaction tRNA(Phe) + L-phenylalanine + ATP = L-phenylalanyl-tRNA(Phe) + AMP + diphosphate + H(+). In Syntrophus aciditrophicus (strain SB), this protein is Phenylalanine--tRNA ligase beta subunit.